Reading from the N-terminus, the 27-residue chain is Delta-conotoxin TxVIB (27 aa).

Intrachain disulfides connect Cys2–Cys17, Cys9–Cys21, and Cys16–Cys26.

This sequence belongs to the conotoxin O1 superfamily. As to expression, expressed by the venom duct.

It localises to the secreted. Functionally, delta-conotoxins bind to site 6 of voltage-gated sodium channels (Nav) and inhibit the inactivation process. Induces membrane depolarization and spontaneous repetitive firing of neurons. The sequence is that of Delta-conotoxin TxVIB from Conus textile (Cloth-of-gold cone).